A 298-amino-acid polypeptide reads, in one-letter code: MPMAKLRNIIKTLSIFFFLIAATAPSLSSATSATDTFVFGGCSQQKFSPASAYESNLNSLLTSLVNSATYSSYNNFTIMGSSSSDTARGLFQCRGDLSMPDCATCVARAVSQVGPLCPFTCGGALQLAGCYIKYDNISFLGQEDKTVVLKKCGSSEGYNTDGISRRDAVLTELVNGGGYFRAGGSGDVQGMGQCVGDLTVSECQDCLGTAIGRLKNDCGTAVFGDMFLAKCYARYSTDGAQHYAKSHNYKTNYGGEKTFAIIIGLLAAVVLLIIFLLFLRGVCSRGGDFSILHSFTLI.

A signal peptide spans 1 to 30 (MPMAKLRNIIKTLSIFFFLIAATAPSLSSA). Over 31–258 (TSATDTFVFG…YKTNYGGEKT (228 aa)) the chain is Extracellular. 2 Gnk2-homologous domains span residues 35–139 (DTFV…NISF) and 140–240 (LGQE…TDGA). 6 disulfide bridges follow: cysteine 42–cysteine 117, cysteine 93–cysteine 102, cysteine 105–cysteine 130, cysteine 152–cysteine 218, cysteine 194–cysteine 203, and cysteine 206–cysteine 231. The chain crosses the membrane as a helical span at residues 259–279 (FAIIIGLLAAVVLLIIFLLFL). Residues 259–279 (FAIIIGLLAAVVLLIIFLLFL) are necessary and sufficient for plasmodesmal targeting. Residues 280-298 (RGVCSRGGDFSILHSFTLI) are Cytoplasmic-facing.

Belongs to the cysteine-rich repeat secretory protein family. Plasmodesmata-located proteins (PDLD) subfamily. (Microbial infection) Interacts with Grapevine fanleaf virus (GFLV) 2B-MP. Highly expressed in lateral root and elongation zone.

It is found in the cell membrane. It localises to the cell junction. The protein resides in the plasmodesma. Its function is as follows. Modulates cell-to-cell trafficking. This chain is Plasmodesmata-located protein 7, found in Arabidopsis thaliana (Mouse-ear cress).